Reading from the N-terminus, the 196-residue chain is MTHATDVLTLGRWMAADFSNQAQAFENPPFYAHIRVCMRPLPRGVLEGIALYVEQAYDYLLSVPYRTRVLELMPANDHIVIKNYVLKDEKRFFGAARDRQRLQAMTADDLELLCGCNMLTYWTGHSFRGEVEPGKACKVVRKGRETYLDSTFEIDGDRFISHDRGRDPETDEHVWGSVAGPFHFVRWQSFADEVMA.

This sequence belongs to the CpcT/CpeT biliprotein lyase family.

Covalently attaches a chromophore to Cys residue(s) of phycobiliproteins. In Thermosynechococcus vestitus (strain NIES-2133 / IAM M-273 / BP-1), this protein is Chromophore lyase CpcT/CpeT.